Consider the following 97-residue polypeptide: Exodeoxyribonuclease 7 small subunit (97 aa).

Residues Met-1–Asn-22 form a disordered region.

It belongs to the XseB family. Heterooligomer composed of large and small subunits.

The protein localises to the cytoplasm. It carries out the reaction Exonucleolytic cleavage in either 5'- to 3'- or 3'- to 5'-direction to yield nucleoside 5'-phosphates.. In terms of biological role, bidirectionally degrades single-stranded DNA into large acid-insoluble oligonucleotides, which are then degraded further into small acid-soluble oligonucleotides. This Burkholderia lata (strain ATCC 17760 / DSM 23089 / LMG 22485 / NCIMB 9086 / R18194 / 383) protein is Exodeoxyribonuclease 7 small subunit.